A 64-amino-acid polypeptide reads, in one-letter code: Large ribosomal subunit protein bL35 (64 aa).

The interval 1 to 20 (MKQKTHKGTAKRIKVTGSGK) is disordered.

Belongs to the bacterial ribosomal protein bL35 family.

This is Large ribosomal subunit protein bL35 from Corynebacterium urealyticum (strain ATCC 43042 / DSM 7109).